The sequence spans 505 residues: L-arabinose isomerase (505 aa).

Glutamate 310, glutamate 337, histidine 354, and histidine 453 together coordinate Mn(2+).

This sequence belongs to the arabinose isomerase family. The cofactor is Mn(2+).

The enzyme catalyses beta-L-arabinopyranose = L-ribulose. It functions in the pathway carbohydrate degradation; L-arabinose degradation via L-ribulose; D-xylulose 5-phosphate from L-arabinose (bacterial route): step 1/3. Functionally, catalyzes the conversion of L-arabinose to L-ribulose. The sequence is that of L-arabinose isomerase from Clavibacter sepedonicus (Clavibacter michiganensis subsp. sepedonicus).